We begin with the raw amino-acid sequence, 265 residues long: Undecaprenyl-diphosphatase (265 aa).

8 helical membrane passes run 15–37 (GLTEFLPVSSTGHLIITGYLLEY), 41–61 (KAESFQVAIQLGAILAVVFLY), 85–105 (YLLALTSAPASVLGLLTHSFI), 109–129 (LFGPVTVAWALAAGALYILAV), 144–164 (VSPALALGIGMFQCLALWPGF), 183–203 (LAAEYSFVAAVPIMFAATGYD), 218–238 (FWAVGLLVSFASAWAAVKGFI), and 244–264 (VTFRPFAWYRLALAPVVLLFW).

It belongs to the UppP family.

It is found in the cell inner membrane. It catalyses the reaction di-trans,octa-cis-undecaprenyl diphosphate + H2O = di-trans,octa-cis-undecaprenyl phosphate + phosphate + H(+). Its function is as follows. Catalyzes the dephosphorylation of undecaprenyl diphosphate (UPP). Confers resistance to bacitracin. The polypeptide is Undecaprenyl-diphosphatase (Oleidesulfovibrio alaskensis (strain ATCC BAA-1058 / DSM 17464 / G20) (Desulfovibrio alaskensis)).